The following is a 307-amino-acid chain: Adenosylcobinamide-GDP ribazoletransferase (307 aa).

A run of 8 helical transmembrane segments spans residues 22–42 (PLFEGIFTALNWMTVLPVPGA), 58–78 (PFVGFVFGMFTAIIMWAIGPI), 80–100 (GVIHVDGLLVAVLIVAFWELL), 137–157 (FGLATAMLSVLLQVAAVASLV), 161–181 (VWWMICFIPVLGRIAGQVTAL), 212–232 (TAALAFWCAELISPLSPLTSV), 248–268 (AWLGGWVAITAVVACVFAALF), and 283–303 (CIGACIHLGASISAVMFAVVA).

The protein belongs to the CobS family. Mg(2+) is required as a cofactor.

The protein localises to the cell membrane. It carries out the reaction alpha-ribazole + adenosylcob(III)inamide-GDP = adenosylcob(III)alamin + GMP + H(+). The enzyme catalyses alpha-ribazole 5'-phosphate + adenosylcob(III)inamide-GDP = adenosylcob(III)alamin 5'-phosphate + GMP + H(+). The protein operates within cofactor biosynthesis; adenosylcobalamin biosynthesis; adenosylcobalamin from cob(II)yrinate a,c-diamide: step 7/7. In terms of biological role, joins adenosylcobinamide-GDP and alpha-ribazole to generate adenosylcobalamin (Ado-cobalamin). Also synthesizes adenosylcobalamin 5'-phosphate from adenosylcobinamide-GDP and alpha-ribazole 5'-phosphate. In Corynebacterium glutamicum (strain ATCC 13032 / DSM 20300 / JCM 1318 / BCRC 11384 / CCUG 27702 / LMG 3730 / NBRC 12168 / NCIMB 10025 / NRRL B-2784 / 534), this protein is Adenosylcobinamide-GDP ribazoletransferase.